A 326-amino-acid polypeptide reads, in one-letter code: Eukaryotic translation initiation factor 3 subunit I (326 aa).

WD repeat units lie at residues 8–47 (GHERSITQIKYNREGDLLFSSSKDQKPNVWYSLNGERLGT), 50–89 (GHQGAVWCLDVDWESRKLITGAGDMTTKLWDVEYGTVIAS), 145–184 (MVESKITSMQWGPLDETIITGHDNGNIAIWDVRKGQKVVD), 188–227 (DHAAGINDMQLSKDGTMFVTASKDNTAKLFDAESLMCLKT), and 285–326 (GHFG…NIFE).

The protein belongs to the eIF-3 subunit I family. Component of the eukaryotic translation initiation factor 3 (eIF-3) complex. The eIF-3 complex interacts with pix.

It localises to the cytoplasm. Functionally, component of the eukaryotic translation initiation factor 3 (eIF-3) complex, which is involved in protein synthesis of a specialized repertoire of mRNAs and, together with other initiation factors, stimulates binding of mRNA and methionyl-tRNAi to the 40S ribosome. The eIF-3 complex specifically targets and initiates translation of a subset of mRNAs involved in cell proliferation. The chain is Eukaryotic translation initiation factor 3 subunit I from Drosophila grimshawi (Hawaiian fruit fly).